The following is a 539-amino-acid chain: Glucose-6-phosphate isomerase (539 aa).

Catalysis depends on Glu-349, which acts as the Proton donor. Active-site residues include His-380 and Lys-508.

It belongs to the GPI family.

The protein resides in the cytoplasm. The catalysed reaction is alpha-D-glucose 6-phosphate = beta-D-fructose 6-phosphate. Its pathway is carbohydrate biosynthesis; gluconeogenesis. It participates in carbohydrate degradation; glycolysis; D-glyceraldehyde 3-phosphate and glycerone phosphate from D-glucose: step 2/4. Functionally, catalyzes the reversible isomerization of glucose-6-phosphate to fructose-6-phosphate. The sequence is that of Glucose-6-phosphate isomerase from Caulobacter sp. (strain K31).